Here is a 64-residue protein sequence, read N- to C-terminus: U6-theraphotoxin-Cg1a (64 aa).

The first 20 residues, 1 to 20 (MTRKILAVLLVFTLVACNNA), serve as a signal peptide directing secretion. A propeptide spanning residues 21–38 (EKYSETDVEDSPMIQERR) is cleaved from the precursor. 3 disulfides stabilise this stretch: Cys39-Cys55, Cys46-Cys58, and Cys54-Cys63.

The protein belongs to the neurotoxin 36 family. 02 subfamily. Expressed by the venom gland.

The protein resides in the secreted. Functionally, probable ion channel inhibitor. The polypeptide is U6-theraphotoxin-Cg1a (Chilobrachys guangxiensis (Chinese earth tiger tarantula)).